The primary structure comprises 503 residues: NAD-dependent protein deacetylase HST1 (503 aa).

In terms of domain architecture, Deacetylase sirtuin-type spans 183–468; that stretch reads RLPNFNTIDH…SLVAKKCHWD (286 aa). NAD(+) contacts are provided by residues 208–227 and 290–293; these read GAGV…EGFY and QNID. Histidine 310 acts as the Proton acceptor in catalysis. The Zn(2+) site is built by cysteine 318, cysteine 321, cysteine 342, and cysteine 345. NAD(+) is bound by residues 412–414, 437–439, and cysteine 454; these read GTS and NRD.

It belongs to the sirtuin family. Class I subfamily. As to quaternary structure, identified in the Set3C complex with HOS2, SIF2, SNT1, CPR1, HOS4/YIL112W and SET3. Its presence is however not essential for meiotic repression by the Set3C complex. Interacts with SUM1 and RFM1. The interaction with SUM1 is mediated by RFM1. Requires Zn(2+) as cofactor.

It localises to the nucleus. The enzyme catalyses N(6)-acetyl-L-lysyl-[protein] + NAD(+) + H2O = 2''-O-acetyl-ADP-D-ribose + nicotinamide + L-lysyl-[protein]. In terms of biological role, NAD-dependent histone deacetylase involved in telomeric silencing. Histone deacetylase proteins act via the formation of large multiprotein complexes that are responsible for the deacetylation of lysine residues on the N-terminal part of the core histones (H2A, H2B, H3 and H4). Histone deacetylation gives a tag for epigenetic repression and plays an important role in transcriptional regulation, cell cycle progression and developmental events. Restores silencing at HMR in SIR2 mutants when overexpressed. Required to repress middle sporulation genes during vegetative growth. Acts as a sensor of NAD(+) levels and regulator of NAD(+) biosynthesis. Regulates the gene expression of de novo NAD(+) biosynthesis genes. The chain is NAD-dependent protein deacetylase HST1 (HST1) from Saccharomyces cerevisiae (strain ATCC 204508 / S288c) (Baker's yeast).